A 268-amino-acid polypeptide reads, in one-letter code: Tryptophan synthase alpha chain (268 aa).

Catalysis depends on proton acceptor residues E49 and D60.

Belongs to the TrpA family. Tetramer of two alpha and two beta chains.

It catalyses the reaction (1S,2R)-1-C-(indol-3-yl)glycerol 3-phosphate + L-serine = D-glyceraldehyde 3-phosphate + L-tryptophan + H2O. Its pathway is amino-acid biosynthesis; L-tryptophan biosynthesis; L-tryptophan from chorismate: step 5/5. The alpha subunit is responsible for the aldol cleavage of indoleglycerol phosphate to indole and glyceraldehyde 3-phosphate. The sequence is that of Tryptophan synthase alpha chain from Escherichia coli O6:K15:H31 (strain 536 / UPEC).